The primary structure comprises 272 residues: MPKITKIEVQKKNKERFNLYLDEEFEMGIDMDTYVHFNLKKGQIVDAADMEKIQKYDQYRQAVNVAIQFLSYRKRTDHEVIQHLQKKEISESVIASVIDYCHEQRLIDHEDYANSLKNTMILTTDKGPGIFRQKLRDAGVEQTIIDVYAERYENEQPMEDIIKVANKILKQKKGPTVKRKEKLSQALMQKGYSFEIIKVVMDEMDFSQPEAELDGLLQQELEKVYNKYSRKFSGRKLINKTIEGLMRKGYKYDKIKAKLEESGIVDGTEEIE.

Belongs to the RecX family.

Its subcellular location is the cytoplasm. Functionally, modulates RecA activity. In Staphylococcus saprophyticus subsp. saprophyticus (strain ATCC 15305 / DSM 20229 / NCIMB 8711 / NCTC 7292 / S-41), this protein is Regulatory protein RecX.